A 423-amino-acid polypeptide reads, in one-letter code: Histidine--tRNA ligase (423 aa).

The protein belongs to the class-II aminoacyl-tRNA synthetase family. As to quaternary structure, homodimer.

It localises to the cytoplasm. The enzyme catalyses tRNA(His) + L-histidine + ATP = L-histidyl-tRNA(His) + AMP + diphosphate + H(+). The sequence is that of Histidine--tRNA ligase from Rhodococcus erythropolis (strain PR4 / NBRC 100887).